Here is a 121-residue protein sequence, read N- to C-terminus: UPF0344 protein BC_1150 (121 aa).

The next 4 helical transmembrane spans lie at 6–26 (ITAW…YSAG), 38–58 (LMYI…VKTA), 65–85 (WYGL…MVLV), and 92–112 (PTGA…YLGL).

Belongs to the UPF0344 family.

The protein localises to the cell membrane. This chain is UPF0344 protein BC_1150, found in Bacillus cereus (strain ATCC 14579 / DSM 31 / CCUG 7414 / JCM 2152 / NBRC 15305 / NCIMB 9373 / NCTC 2599 / NRRL B-3711).